The sequence spans 131 residues: Small ribosomal subunit protein eS17 (131 aa).

The protein belongs to the eukaryotic ribosomal protein eS17 family.

The sequence is that of Small ribosomal subunit protein eS17 (RPS17) from Theileria annulata.